A 513-amino-acid polypeptide reads, in one-letter code: Putative ribose/galactose/methyl galactoside import ATP-binding protein (513 aa).

2 ABC transporter domains span residues 24 to 260 (LSAE…VGRE) and 270 to 510 (VPIG…VMEL). An ATP-binding site is contributed by 56–63 (GENGAGKS).

It belongs to the ABC transporter superfamily. Carbohydrate importer 2 (CUT2) (TC 3.A.1.2) family.

The protein resides in the cell inner membrane. It carries out the reaction D-ribose(out) + ATP + H2O = D-ribose(in) + ADP + phosphate + H(+). It catalyses the reaction D-galactose(out) + ATP + H2O = D-galactose(in) + ADP + phosphate + H(+). In terms of biological role, part of an ABC transporter complex involved in carbohydrate import. Could be involved in ribose, galactose and/or methyl galactoside import. Responsible for energy coupling to the transport system. This chain is Putative ribose/galactose/methyl galactoside import ATP-binding protein, found in Rhizobium johnstonii (strain DSM 114642 / LMG 32736 / 3841) (Rhizobium leguminosarum bv. viciae).